The chain runs to 169 residues: Large ribosomal subunit protein uL10 (169 aa).

Belongs to the universal ribosomal protein uL10 family. In terms of assembly, part of the ribosomal stalk of the 50S ribosomal subunit. The N-terminus interacts with L11 and the large rRNA to form the base of the stalk. The C-terminus forms an elongated spine to which L12 dimers bind in a sequential fashion forming a multimeric L10(L12)X complex.

In terms of biological role, forms part of the ribosomal stalk, playing a central role in the interaction of the ribosome with GTP-bound translation factors. The polypeptide is Large ribosomal subunit protein uL10 (Rickettsia peacockii (strain Rustic)).